The sequence spans 152 residues: Regulatory protein RecX (152 aa).

Belongs to the RecX family.

The protein resides in the cytoplasm. In terms of biological role, modulates RecA activity. The chain is Regulatory protein RecX from Haemophilus influenzae (strain PittEE).